A 1026-amino-acid chain; its full sequence is Multidrug resistance protein MdtC (1026 aa).

Helical transmembrane passes span 15 to 35 (ILIA…LPVA), 333 to 353 (EVEE…FLFL), 360 to 380 (LIPA…MYLC), 387 to 407 (LSLM…IVVL), 431 to 451 (VGFT…PLLL), 463 to 483 (FAVT…TLTP), 528 to 548 (LVGV…IAIP), 853 to 873 (LILI…LYES), 897 to 917 (LFNA…IGIV), 953 to 973 (PIMM…LSGG), and 984 to 1004 (ITIV…TPVV).

Belongs to the resistance-nodulation-cell division (RND) (TC 2.A.6) family. MdtC subfamily. In terms of assembly, part of a tripartite efflux system composed of MdtA, MdtB and MdtC. MdtC forms a heteromultimer with MdtB.

It localises to the cell inner membrane. This is Multidrug resistance protein MdtC from Salmonella gallinarum (strain 287/91 / NCTC 13346).